A 488-amino-acid polypeptide reads, in one-letter code: Glutamyl-tRNA(Gln) amidotransferase subunit A (488 aa).

Residues Lys77 and Ser152 each act as charge relay system in the active site. The Acyl-ester intermediate role is filled by Ser176.

It belongs to the amidase family. GatA subfamily. Heterotrimer of A, B and C subunits.

It carries out the reaction L-glutamyl-tRNA(Gln) + L-glutamine + ATP + H2O = L-glutaminyl-tRNA(Gln) + L-glutamate + ADP + phosphate + H(+). Its function is as follows. Allows the formation of correctly charged Gln-tRNA(Gln) through the transamidation of misacylated Glu-tRNA(Gln) in organisms which lack glutaminyl-tRNA synthetase. The reaction takes place in the presence of glutamine and ATP through an activated gamma-phospho-Glu-tRNA(Gln). In Latilactobacillus sakei subsp. sakei (strain 23K) (Lactobacillus sakei subsp. sakei), this protein is Glutamyl-tRNA(Gln) amidotransferase subunit A.